A 710-amino-acid polypeptide reads, in one-letter code: Chaperonin-containing T-complex member BBS12 (710 aa).

The protein belongs to the TCP-1 chaperonin family. BBS12 subfamily. As to quaternary structure, component of the chaperonin-containing T-complex (TRiC), a heterooligomeric complex of about 850 to 900 kDa that forms two stacked rings, 12 to 16 nm in diameter. Interacts with MKKS.

The protein resides in the cell projection. It is found in the cilium. Component of the chaperonin-containing T-complex (TRiC), a molecular chaperone complex that assists the folding of proteins upon ATP hydrolysis. As part of the TRiC complex may play a role in the assembly of BBSome, a complex involved in ciliogenesis regulating transports vesicles to the cilia. Involved in adipogenic differentiation. This chain is Chaperonin-containing T-complex member BBS12 (BBS12), found in Pongo abelii (Sumatran orangutan).